Reading from the N-terminus, the 281-residue chain is Pantothenate synthetase (281 aa).

ATP is bound at residue 30 to 37 (MGNLHLGH). H37 acts as the Proton donor in catalysis. Q61 lines the (R)-pantoate pocket. Q61 contributes to the beta-alanine binding site. 149-152 (GRKD) serves as a coordination point for ATP. Residue Q155 coordinates (R)-pantoate. ATP-binding positions include I178 and 186 to 189 (MSSR).

This sequence belongs to the pantothenate synthetase family. Homodimer.

The protein localises to the cytoplasm. It carries out the reaction (R)-pantoate + beta-alanine + ATP = (R)-pantothenate + AMP + diphosphate + H(+). It functions in the pathway cofactor biosynthesis; (R)-pantothenate biosynthesis; (R)-pantothenate from (R)-pantoate and beta-alanine: step 1/1. In terms of biological role, catalyzes the condensation of pantoate with beta-alanine in an ATP-dependent reaction via a pantoyl-adenylate intermediate. This is Pantothenate synthetase from Shewanella woodyi (strain ATCC 51908 / MS32).